The primary structure comprises 249 residues: Methyl-coenzyme M reductase I subunit gamma (249 aa).

Arg120 contacts coenzyme M.

The protein belongs to the methyl-coenzyme M reductase gamma subunit family. As to quaternary structure, MCR is a hexamer of two alpha, two beta, and two gamma chains, forming a dimer of heterotrimers. The cofactor is coenzyme F430.

Its subcellular location is the cytoplasm. It carries out the reaction coenzyme B + methyl-coenzyme M = methane + coenzyme M-coenzyme B heterodisulfide. It participates in one-carbon metabolism; methyl-coenzyme M reduction; methane from methyl-coenzyme M: step 1/1. In terms of biological role, component of the methyl-coenzyme M reductase (MCR) I that catalyzes the reductive cleavage of methyl-coenzyme M (CoM-S-CH3 or 2-(methylthio)ethanesulfonate) using coenzyme B (CoB or 7-mercaptoheptanoylthreonine phosphate) as reductant which results in the production of methane and the mixed heterodisulfide of CoB and CoM (CoM-S-S-CoB). This is the final step in methanogenesis. This is Methyl-coenzyme M reductase I subunit gamma (mcrG) from Methanothermobacter thermautotrophicus (strain ATCC 29096 / DSM 1053 / JCM 10044 / NBRC 100330 / Delta H) (Methanobacterium thermoautotrophicum).